The primary structure comprises 312 residues: Protein phosphatase PTC7 homolog fig (312 aa).

The 265-residue stretch at 42-306 folds into the PPM-type phosphatase domain; sequence IQGSSKDQLA…DDITVILASV (265 aa). Residues D83, G84, and D228 each contribute to the Mn(2+) site.

It belongs to the PP2C family. Requires Mg(2+) as cofactor. It depends on Mn(2+) as a cofactor.

The enzyme catalyses O-phospho-L-seryl-[protein] + H2O = L-seryl-[protein] + phosphate. It catalyses the reaction O-phospho-L-threonyl-[protein] + H2O = L-threonyl-[protein] + phosphate. In Drosophila mojavensis (Fruit fly), this protein is Protein phosphatase PTC7 homolog fig.